A 394-amino-acid polypeptide reads, in one-letter code: Elongation factor Tu (394 aa).

The 195-residue stretch at 10–204 (KPHVNIGTIG…AVDSYIPQPV (195 aa)) folds into the tr-type G domain. The segment at 19–26 (GHVDHGKT) is G1. 19 to 26 (GHVDHGKT) is a GTP binding site. Position 26 (T26) interacts with Mg(2+). The G2 stretch occupies residues 60–64 (GITIS). A G3 region spans residues 81–84 (DCPG). GTP is bound by residues 81–85 (DCPGH) and 136–139 (NKVD). The tract at residues 136-139 (NKVD) is G4. The G5 stretch occupies residues 174–176 (SAL).

It belongs to the TRAFAC class translation factor GTPase superfamily. Classic translation factor GTPase family. EF-Tu/EF-1A subfamily. As to quaternary structure, monomer.

It localises to the cytoplasm. It carries out the reaction GTP + H2O = GDP + phosphate + H(+). Functionally, GTP hydrolase that promotes the GTP-dependent binding of aminoacyl-tRNA to the A-site of ribosomes during protein biosynthesis. This is Elongation factor Tu from Rickettsia rhipicephali.